We begin with the raw amino-acid sequence, 180 residues long: UPF0227 protein YE1706 (180 aa).

It belongs to the UPF0227 family.

This Yersinia enterocolitica serotype O:8 / biotype 1B (strain NCTC 13174 / 8081) protein is UPF0227 protein YE1706.